The chain runs to 82 residues: Protein transport protein SBH1 (82 aa).

The disordered stretch occupies residues 1-36 (MSSPTPPGGQRTLQKRKQGSSQKVAASAPKKNTNSN). Over 1 to 53 (MSSPTPPGGQRTLQKRKQGSSQKVAASAPKKNTNSNNSILKIYSDEATGLRVD) the chain is Cytoplasmic. Over residues 19-36 (GSSQKVAASAPKKNTNSN) the composition is skewed to polar residues. The helical transmembrane segment at 54 to 74 (PLVVLFLAVGFIFSVVALHVI) threads the bilayer.

This sequence belongs to the SEC61-beta family. In terms of assembly, component of the heterotrimeric Sec61 complex, which is composed of SSH1, SBH1 and SSS1. Presumably three to four Sec61 heterotrimers assemble into an oligomeric ring with a central aqueous pore. In cotranslational ER import, the pore diameter varies from 9-15 A in a ribosome-free resting state to 40-60 A in a functional state when associated with the ribosome. The Sec61 complex is part of a channel-forming translocon complex whose composition seem to change dependent upon different functional states. During post-translational ER import the Sec61 complex associates with the Sec62/63 complex to form the Sec complex. SBH1 interacts OST2, OST4 and WBP1 components of the OT complex.

The protein resides in the endoplasmic reticulum membrane. Its function is as follows. Part of the Sec61 complex, which is the major component of a channel-forming translocon complex that mediates protein translocation across the endoplasmic reticulum (ER). The functional states of the translocon complex include co- and post-translational ER import, cotranslational membrane protein integration and retrograde transport of misfolded proteins out of the ER. In the cotranslational pathway, ribosomes synthesizing presecretory proteins are targeted to the translocon by the cytosolic signal recognition particle (SRP) and its ER-localized receptor. The association of the Sec61 complex with the ribosome is mediated by the 28S rRNA of the large ribosomal subunit. SRP-independent post-translational translocation requires the association of additional factors, such as the Sec62/63 complex and KAR2. This Saccharomyces cerevisiae (strain ATCC 204508 / S288c) (Baker's yeast) protein is Protein transport protein SBH1 (SBH1).